The following is a 104-amino-acid chain: Growth-regulated protein homolog alpha (104 aa).

Positions 1–30 are cleaved as a signal peptide; it reads MAPAATAAAPRLLRAAMLFLLLVAAGRRAA. 2 disulfides stabilise this stretch: cysteine 40-cysteine 66 and cysteine 42-cysteine 82.

This sequence belongs to the intercrine alpha (chemokine CxC) family.

The protein localises to the secreted. This chain is Growth-regulated protein homolog alpha, found in Bos taurus (Bovine).